The following is a 65-amino-acid chain: Large ribosomal subunit protein bL35 (65 aa).

Positions 1–16 (MPKMKTHRASAKRFKK) are enriched in basic residues. The tract at residues 1-24 (MPKMKTHRASAKRFKKTANGGLKS) is disordered.

This sequence belongs to the bacterial ribosomal protein bL35 family.

This Leuconostoc mesenteroides subsp. mesenteroides (strain ATCC 8293 / DSM 20343 / BCRC 11652 / CCM 1803 / JCM 6124 / NCDO 523 / NBRC 100496 / NCIMB 8023 / NCTC 12954 / NRRL B-1118 / 37Y) protein is Large ribosomal subunit protein bL35.